Reading from the N-terminus, the 123-residue chain is Small ribosomal subunit protein eS8 (123 aa).

The disordered stretch occupies residues 1–37 (MKDQGRSTRKRTGGRLKHASNKKRHQLGREPAETTVG). Basic residues predominate over residues 7–26 (STRKRTGGRLKHASNKKRHQ).

The protein belongs to the eukaryotic ribosomal protein eS8 family. In terms of assembly, part of the 30S ribosomal subunit.

The sequence is that of Small ribosomal subunit protein eS8 from Halorubrum lacusprofundi (strain ATCC 49239 / DSM 5036 / JCM 8891 / ACAM 34).